The sequence spans 360 residues: tRNA (guanine(37)-N(1))-methyltransferase (360 aa).

S-adenosyl-L-methionine is bound by residues arginine 197, 235 to 236, and asparagine 283; that span reads DL.

The protein belongs to the class I-like SAM-binding methyltransferase superfamily. TRM5/TYW2 family. Monomer.

It localises to the mitochondrion matrix. It is found in the nucleus. Its subcellular location is the cytoplasm. It carries out the reaction guanosine(37) in tRNA + S-adenosyl-L-methionine = N(1)-methylguanosine(37) in tRNA + S-adenosyl-L-homocysteine + H(+). Specifically methylates the N1 position of guanosine-37 in various cytoplasmic and mitochondrial tRNAs. Methylation is not dependent on the nature of the nucleoside 5' of the target nucleoside. This is the first step in the biosynthesis of wybutosine (yW), a modified base adjacent to the anticodon of tRNAs and required for accurate decoding. This is tRNA (guanine(37)-N(1))-methyltransferase from Encephalitozoon cuniculi (strain GB-M1) (Microsporidian parasite).